A 278-amino-acid polypeptide reads, in one-letter code: Formyltetrahydrofolate deformylase (278 aa).

Positions 6 to 85 constitute an ACT domain; the sequence is ILLTDCPDDK…RLIGTQRKRI (80 aa). Asp223 is a catalytic residue.

This sequence belongs to the PurU family.

The enzyme catalyses (6R)-10-formyltetrahydrofolate + H2O = (6S)-5,6,7,8-tetrahydrofolate + formate + H(+). It functions in the pathway purine metabolism; IMP biosynthesis via de novo pathway; formate from 10-formyl-5,6,7,8-tetrahydrofolate: step 1/1. Catalyzes the hydrolysis of 10-formyltetrahydrofolate (formyl-FH4) to formate and tetrahydrofolate (FH4). This Haemophilus influenzae (strain ATCC 51907 / DSM 11121 / KW20 / Rd) protein is Formyltetrahydrofolate deformylase.